We begin with the raw amino-acid sequence, 48 residues long: Large ribosomal subunit protein bL33B (48 aa).

It belongs to the bacterial ribosomal protein bL33 family.

This is Large ribosomal subunit protein bL33B (rpmG2) from Mycoplasma pneumoniae (strain ATCC 29342 / M129 / Subtype 1) (Mycoplasmoides pneumoniae).